We begin with the raw amino-acid sequence, 368 residues long: FAD-dependent monooxygenase phomE (368 aa).

An FAD-binding site is contributed by alanine 11. Catalysis depends on residues arginine 140 and tyrosine 178. FAD contacts are provided by aspartate 249 and glycine 262.

It belongs to the paxM FAD-dependent monooxygenase family. Monomer. Requires FAD as cofactor.

In terms of biological role, FAD-dependent monooxygenase; part of the gene cluster that mediates the biosynthesis of the phomopsins, a group of hexapeptide mycotoxins which infects lupins and causes lupinosis disease in livestock. The role of phomE within the phomopsins biosynthesis pathway has still to be determined. The pathway starts with the processing of the precursor phomA by several endopeptidases including kexin proteases as well as the cluster-specific S41 family peptidase phomP1 and the oligopeptidase phomG to produce 10 identical copies of the hexapeptide Tyr-Val-Ile-Pro-Ile-Asp. After being excised from the precursor peptide, the core peptides are cyclized and modified post-translationally by enzymes encoded within the gene cluster. The timing and order of proteolysis of the phomA precursor and PTMs are still unknown. Two tyrosinase-like enzymes, phomQ1 and phomQ2, catalyze the chlorination and hydroxylation of Tyr, respectively. PhomYb, is proposed to be involved in the construction of the macrocyclic structure. The other 4 ustYa family proteins may be involved in PTMs that generate the unique structure of phomopsin A. PhomYa is required for the hydroxylation of C-beta of Tyr. PhomYc, phomYd, and phomYe are responsible for the biosynthesis of 2,3-dehydroisoleucine (dIle), 2,3-dehydroaspartic acid (dAsp), and 3,4-dehydroproline (dPro), respectively. While dIle formation by phomYc is indispensable for the installation of dAsp by phomYd, the order of the other PTMs have not been elucidated yet. Most of the biosynthetic enzymes likely have broad substrate specificity, and thus, there might be a metabolic grid from a precursor to phomopsin A. The enzyme(s) responsible for the biosynthesis of 3,4-dehydrovaline (dVal) have also not been identified yet. Finally, phomM acts as an S-adenosylmethionine-dependent alpha-N-methyltransferase that catalyzes two successive N-methylation reactions, converting N-desmethyl-phomopsin A to phomopsin A and phomopsin A further to an N,N-dimethylated congener called phomopsin E. The polypeptide is FAD-dependent monooxygenase phomE (Diaporthe leptostromiformis (Lupinosis disease fungus)).